Reading from the N-terminus, the 285-residue chain is Inhibitor of growth protein 5 (285 aa).

The tract at residues 116-225 (EKASSTRAKS…ATHPSDVMDM (110 aa)) is disordered. Basic residues predominate over residues 131 to 149 (KKGRKKTKDSKTTGKKKKS). Residues 160 to 178 (NNQSNANSSVNSSSNAGQG) show a composition bias toward low complexity. The PHD-type zinc finger occupies 232–281 (PTYCLCHQVSYGEMIGCDNPDCPIEWFHFACVGLTTKPKGKWFCPKCTQD). Cys-235, Cys-237, Cys-248, Cys-253, His-259, Cys-262, Cys-275, and Cys-278 together coordinate Zn(2+).

The protein belongs to the ING family. Component of the Enok complex composed of at least Br140, enok, Eaf6 and Ing5.

It is found in the nucleus. The protein localises to the chromosome. Component of the Enok complex which has a histone H3 acetyltransferase activity. The chain is Inhibitor of growth protein 5 from Drosophila melanogaster (Fruit fly).